The following is a 202-amino-acid chain: Secreted RxLR effector protein 93 (202 aa).

The first 16 residues, 1–16, serve as a signal peptide directing secretion; sequence MRFYLTKLFAAAGALA. The interval 29 to 58 is disordered; the sequence is TPVSPLSRSSDHHQSDDSTQRRLRTLNGAD. Basic and acidic residues predominate over residues 37 to 48; the sequence is SSDHHQSDDSTQ. A RxLR-dEER motif is present at residues 49–61; it reads RRLRTLNGADEER.

It belongs to the RxLR effector family.

The protein localises to the secreted. It is found in the host nucleus. Functionally, secreted effector that completely suppresses the host cell death induced by cell death-inducing proteins. The polypeptide is Secreted RxLR effector protein 93 (Plasmopara viticola (Downy mildew of grapevine)).